Consider the following 261-residue polypeptide: Cytochrome c oxidase subunit 3 (261 aa).

At 1–15 (MTHQTHAYHMVNPSP) the chain is on the mitochondrial matrix side. The chain crosses the membrane as a helical span at residues 16–34 (WPLTGALSALLMTSGLIMW). The Mitochondrial intermembrane portion of the chain corresponds to 35–40 (FHFNST). The helical transmembrane segment at 41–66 (TLLMLGLTTNMLTMYQWWRDIIREST) threads the bilayer. Topologically, residues 67–72 (FQGHHT) are mitochondrial matrix. The chain crosses the membrane as a helical span at residues 73-105 (PSVQKGLRYGMILFIISEVLFFTGFFWAFYHSS). Over 106 to 128 (LAPTPELGGCWPPTGIHPLNPLE) the chain is Mitochondrial intermembrane. Residues 129 to 152 (VPLLNTSVLLASGVSITWAHHSLM) form a helical membrane-spanning segment. The Mitochondrial matrix portion of the chain corresponds to 153–155 (EGN). Residues 156–183 (RNHMLQALFITIALGVYFTLLQASEYYE) form a helical membrane-spanning segment. At 184–190 (APFTISD) the chain is on the mitochondrial intermembrane side. Residues 191–223 (GVYGSTFFVATGFHGLHVIIGSTFLIVCFFRQL) traverse the membrane as a helical segment. The Mitochondrial matrix segment spans residues 224-232 (KFHFTSNHH). A helical membrane pass occupies residues 233–256 (FGFEAAAWYWHFVDVVWLFLYVSI). The Mitochondrial intermembrane segment spans residues 257-261 (YWWGS).

Belongs to the cytochrome c oxidase subunit 3 family. As to quaternary structure, component of the cytochrome c oxidase (complex IV, CIV), a multisubunit enzyme composed of 14 subunits. The complex is composed of a catalytic core of 3 subunits MT-CO1, MT-CO2 and MT-CO3, encoded in the mitochondrial DNA, and 11 supernumerary subunits COX4I, COX5A, COX5B, COX6A, COX6B, COX6C, COX7A, COX7B, COX7C, COX8 and NDUFA4, which are encoded in the nuclear genome. The complex exists as a monomer or a dimer and forms supercomplexes (SCs) in the inner mitochondrial membrane with NADH-ubiquinone oxidoreductase (complex I, CI) and ubiquinol-cytochrome c oxidoreductase (cytochrome b-c1 complex, complex III, CIII), resulting in different assemblies (supercomplex SCI(1)III(2)IV(1) and megacomplex MCI(2)III(2)IV(2)).

Its subcellular location is the mitochondrion inner membrane. It catalyses the reaction 4 Fe(II)-[cytochrome c] + O2 + 8 H(+)(in) = 4 Fe(III)-[cytochrome c] + 2 H2O + 4 H(+)(out). Functionally, component of the cytochrome c oxidase, the last enzyme in the mitochondrial electron transport chain which drives oxidative phosphorylation. The respiratory chain contains 3 multisubunit complexes succinate dehydrogenase (complex II, CII), ubiquinol-cytochrome c oxidoreductase (cytochrome b-c1 complex, complex III, CIII) and cytochrome c oxidase (complex IV, CIV), that cooperate to transfer electrons derived from NADH and succinate to molecular oxygen, creating an electrochemical gradient over the inner membrane that drives transmembrane transport and the ATP synthase. Cytochrome c oxidase is the component of the respiratory chain that catalyzes the reduction of oxygen to water. Electrons originating from reduced cytochrome c in the intermembrane space (IMS) are transferred via the dinuclear copper A center (CU(A)) of subunit 2 and heme A of subunit 1 to the active site in subunit 1, a binuclear center (BNC) formed by heme A3 and copper B (CU(B)). The BNC reduces molecular oxygen to 2 water molecules using 4 electrons from cytochrome c in the IMS and 4 protons from the mitochondrial matrix. The sequence is that of Cytochrome c oxidase subunit 3 (MT-CO3) from Pelea capreolus (Gray rhebok).